Reading from the N-terminus, the 402-residue chain is Prophage integrase IntZ (402 aa).

The Core-binding (CB) domain maps to 103 to 183 (AGFKKVAEDW…RIGEIFKFAV (81 aa)). The 176-residue stretch at 206-381 (GHNAWIPISE…AYLKQRRAMM (176 aa)) folds into the Tyr recombinase domain. Residues arginine 244, lysine 271, histidine 332, arginine 335, and histidine 359 contribute to the active site. Tyrosine 368 (O-(3'-phospho-DNA)-tyrosine intermediate) is an active-site residue.

Belongs to the 'phage' integrase family.

Integrase is necessary for integration of the phage into the host genome by site-specific recombination. In conjunction with excisionase, integrase is also necessary for excision of the prophage from the host genome. In Escherichia coli (strain K12), this protein is Prophage integrase IntZ (intZ).